The following is a 561-amino-acid chain: Arginine--tRNA ligase (561 aa).

A 'HIGH' region motif is present at residues 135–145; the sequence is ANPTGLLHMGN.

This sequence belongs to the class-I aminoacyl-tRNA synthetase family. Monomer.

Its subcellular location is the cytoplasm. The enzyme catalyses tRNA(Arg) + L-arginine + ATP = L-arginyl-tRNA(Arg) + AMP + diphosphate. The chain is Arginine--tRNA ligase from Desulfitobacterium hafniense (strain DSM 10664 / DCB-2).